Reading from the N-terminus, the 121-residue chain is Iron-sulfur cluster assembly protein CyaY (121 aa).

This sequence belongs to the frataxin family.

Its function is as follows. Involved in iron-sulfur (Fe-S) cluster assembly. May act as a regulator of Fe-S biogenesis. The polypeptide is Iron-sulfur cluster assembly protein CyaY (Buchnera aphidicola subsp. Schizaphis graminum (strain Sg)).